The following is a 174-amino-acid chain: ATP-dependent protease subunit HslV (174 aa).

Thr4 is an active-site residue. Na(+) contacts are provided by Ala159, Cys162, and Thr165.

This sequence belongs to the peptidase T1B family. HslV subfamily. In terms of assembly, a double ring-shaped homohexamer of HslV is capped on each side by a ring-shaped HslU homohexamer. The assembly of the HslU/HslV complex is dependent on binding of ATP.

The protein localises to the cytoplasm. The enzyme catalyses ATP-dependent cleavage of peptide bonds with broad specificity.. Its activity is regulated as follows. Allosterically activated by HslU binding. In terms of biological role, protease subunit of a proteasome-like degradation complex believed to be a general protein degrading machinery. The polypeptide is ATP-dependent protease subunit HslV (Moorella thermoacetica (strain ATCC 39073 / JCM 9320)).